The following is a 171-amino-acid chain: MARINSNSGTAVLSRGAAVPAARRPASGTSASKISKLSSTGPPNAPWSKSLTIFKTFISVYLGQAACLAASSRISSRCIVCIRSTLFLTLFALNVAQEFVFGATPAPTVKTDLNIRDFSKSSCSALKYRIYVSSFVSVLNIILYVLLFLASVVYIRYLCHQSITTETVKDY.

The Virion surface segment spans residues 1–132 (MARINSNSGT…CSALKYRIYV (132 aa)). The chain crosses the membrane as a helical span at residues 133–153 (SSFVSVLNIILYVLLFLASVV). The Intravirion portion of the chain corresponds to 154–171 (YIRYLCHQSITTETVKDY).

Belongs to the herpesviridae glycoprotein N family. In terms of assembly, interacts (via N-terminus) with gM (via N-terminus). The gM-gN heterodimer forms the gCII complex.

The protein resides in the virion membrane. The protein localises to the host membrane. It localises to the host Golgi apparatus. Its subcellular location is the host trans-Golgi network. Envelope glycoprotein necessary for proper maturation of gM and modulation of its membrane fusion activity. Also plays a critical role in virion morphogenesis. The sequence is that of Envelope glycoprotein N from Elephas maximus (Indian elephant).